Reading from the N-terminus, the 282-residue chain is ATP synthase gamma chain (282 aa).

This sequence belongs to the ATPase gamma chain family. F-type ATPases have 2 components, CF(1) - the catalytic core - and CF(0) - the membrane proton channel. CF(1) has five subunits: alpha(3), beta(3), gamma(1), delta(1), epsilon(1). CF(0) has three main subunits: a, b and c.

The protein localises to the cell membrane. In terms of biological role, produces ATP from ADP in the presence of a proton gradient across the membrane. The gamma chain is believed to be important in regulating ATPase activity and the flow of protons through the CF(0) complex. This is ATP synthase gamma chain from Clostridium botulinum (strain Loch Maree / Type A3).